The primary structure comprises 118 residues: MRVKRAVHAKKKRKKYLKAAKGYRGALSRRYKLAKQMYVRSKWYSYVGRKQKKRDMRKLWITRINIAARNEGLKYSELIHGLKLAGVSINRKMLSELAVNDPEAFKEYVKIAKEALAS.

Belongs to the bacterial ribosomal protein bL20 family.

Binds directly to 23S ribosomal RNA and is necessary for the in vitro assembly process of the 50S ribosomal subunit. It is not involved in the protein synthesizing functions of that subunit. This chain is Large ribosomal subunit protein bL20 (rplT), found in Thermotoga maritima (strain ATCC 43589 / DSM 3109 / JCM 10099 / NBRC 100826 / MSB8).